Here is a 65-residue protein sequence, read N- to C-terminus: Large ribosomal subunit protein bL33 (65 aa).

Positions 19–40 are disordered; the sequence is TVPSSKKRSAGVSRYTTEKNRR.

It belongs to the bacterial ribosomal protein bL33 family.

The protein is Large ribosomal subunit protein bL33 of Prochlorococcus marinus (strain NATL2A).